Consider the following 224-residue polypeptide: Oocyte zinc finger protein XlCOF6.1 (224 aa).

8 C2H2-type zinc fingers span residues 6–28, 34–56, 62–84, 90–112, 118–140, 146–168, 174–196, and 202–224; these read FSCS…CRSH, FHCT…QRYH, FTCF…IRMH, FSCS…QKIH, FSCS…YRTH, FPCP…RRTH, FACS…RLGH, and FSCS…LKSH.

This sequence belongs to the krueppel C2H2-type zinc-finger protein family.

The protein resides in the nucleus. Functionally, may be involved in transcriptional regulation. The protein is Oocyte zinc finger protein XlCOF6.1 of Xenopus laevis (African clawed frog).